The primary structure comprises 891 residues: Valine--tRNA ligase (891 aa).

A 'HIGH' region motif is present at residues 43-53; sequence PFTSGTLHLGH. The short motif at 536–540 is the 'KMSKS' region element; the sequence is KMSKS. K539 contacts ATP.

Belongs to the class-I aminoacyl-tRNA synthetase family. ValS type 2 subfamily.

The protein localises to the cytoplasm. It carries out the reaction tRNA(Val) + L-valine + ATP = L-valyl-tRNA(Val) + AMP + diphosphate. Catalyzes the attachment of valine to tRNA(Val). As ValRS can inadvertently accommodate and process structurally similar amino acids such as threonine, to avoid such errors, it has a 'posttransfer' editing activity that hydrolyzes mischarged Thr-tRNA(Val) in a tRNA-dependent manner. This Pyrococcus abyssi (strain GE5 / Orsay) protein is Valine--tRNA ligase.